Reading from the N-terminus, the 478-residue chain is Cytochrome c biogenesis protein CcsB (478 aa).

3 consecutive transmembrane segments (helical) span residues 30–50 (LRLAIGLFLAIALLSAVGTVI), 89–109 (TSWFLALLILFGSSLAACSLT), and 175–195 (FGPILVHVSLLLILLGAIWGS). The interval 453-478 (LSSPPSPAKEPPPAARVGGTESLANG) is disordered. Residues 456 to 466 (PPSPAKEPPPA) are compositionally biased toward pro residues.

Belongs to the Ccs1/CcsB family. May interact with CcsA.

It localises to the cellular thylakoid membrane. In terms of biological role, required during biogenesis of c-type cytochromes (cytochrome c6 and cytochrome f) at the step of heme attachment. The chain is Cytochrome c biogenesis protein CcsB from Synechococcus sp. (strain JA-3-3Ab) (Cyanobacteria bacterium Yellowstone A-Prime).